Reading from the N-terminus, the 209-residue chain is Urease accessory protein UreG (209 aa).

Position 14–21 (14–21) interacts with GTP; sequence GPVGSGKT.

It belongs to the SIMIBI class G3E GTPase family. UreG subfamily. Homodimer. UreD, UreF and UreG form a complex that acts as a GTP-hydrolysis-dependent molecular chaperone, activating the urease apoprotein by helping to assemble the nickel containing metallocenter of UreC. The UreE protein probably delivers the nickel.

The protein localises to the cytoplasm. In terms of biological role, facilitates the functional incorporation of the urease nickel metallocenter. This process requires GTP hydrolysis, probably effectuated by UreG. The protein is Urease accessory protein UreG of Rhodopseudomonas palustris (strain ATCC BAA-98 / CGA009).